The chain runs to 90 residues: Protein E18 (90 aa).

Residues 27-47 (PNMFLTILAVVVIIALIIIFV) traverse the membrane as a helical segment.

Its subcellular location is the virion membrane. Functionally, component of the polyhedra envelope. Plays an essential role in the budded virus production. The protein is Protein E18 (E18) of Autographa californica nuclear polyhedrosis virus (AcMNPV).